The chain runs to 422 residues: Ornithine decarboxylase (422 aa).

The residue at position 71 (lysine 71) is an N6-(pyridoxal phosphate)lysine. Pyridoxal 5'-phosphate contacts are provided by residues serine 203, glycine 240, and 275–278 (EPGR). 331–332 (FD) contacts substrate. Cysteine 359 serves as the catalytic Proton donor; shared with dimeric partner. Residue aspartate 360 participates in substrate binding. Tyrosine 388 contacts pyridoxal 5'-phosphate.

This sequence belongs to the Orn/Lys/Arg decarboxylase class-II family. Homodimer. Only the dimer is catalytically active, as the active sites are constructed of residues from both monomers. The cofactor is pyridoxal 5'-phosphate.

It catalyses the reaction L-ornithine + H(+) = putrescine + CO2. Its pathway is amine and polyamine biosynthesis; putrescine biosynthesis via L-ornithine pathway; putrescine from L-ornithine: step 1/1. With respect to regulation, inhibited by antizyme (AZ) in response to polyamine levels. AZ inhibits the assembly of the functional homodimer by binding to ODC monomers and targeting them for ubiquitin-independent proteolytic destruction by the 26S proteasome. Functionally, catalyzes the first and rate-limiting step of polyamine biosynthesis that converts ornithine into putrescine, which is the precursor for the polyamines, spermidine and spermine. Polyamines are essential for cell proliferation and are implicated in cellular processes, ranging from DNA replication to apoptosis. This chain is Ornithine decarboxylase, found in Caenorhabditis elegans.